A 511-amino-acid chain; its full sequence is Phosphomethylpyrimidine synthase (511 aa).

Residues Asn-127, Met-156, Tyr-185, His-221, 241-243 (SRG), 282-285 (DGLR), and Glu-321 contribute to the substrate site. His-325 lines the Zn(2+) pocket. Tyr-348 is a substrate binding site. Residue His-389 coordinates Zn(2+). Residues Cys-469, Cys-472, and Cys-477 each coordinate [4Fe-4S] cluster. The tract at residues 492–511 (KGMEEKSEVTICNRKKESGK) is disordered.

The protein belongs to the ThiC family. [4Fe-4S] cluster serves as cofactor.

The enzyme catalyses 5-amino-1-(5-phospho-beta-D-ribosyl)imidazole + S-adenosyl-L-methionine = 4-amino-2-methyl-5-(phosphooxymethyl)pyrimidine + CO + 5'-deoxyadenosine + formate + L-methionine + 3 H(+). It functions in the pathway cofactor biosynthesis; thiamine diphosphate biosynthesis. Its function is as follows. Catalyzes the synthesis of the hydroxymethylpyrimidine phosphate (HMP-P) moiety of thiamine from aminoimidazole ribotide (AIR) in a radical S-adenosyl-L-methionine (SAM)-dependent reaction. The polypeptide is Phosphomethylpyrimidine synthase (Leptospira borgpetersenii serovar Hardjo-bovis (strain JB197)).